The sequence spans 100 residues: Small ribosomal subunit protein uS14c (100 aa).

The span at 28–45 (KKEIKKVPSLSEKMEIHG) shows a compositional bias: basic and acidic residues. Residues 28–59 (KKEIKKVPSLSEKMEIHGKLQSPPRNSAPTRL) form a disordered region.

This sequence belongs to the universal ribosomal protein uS14 family. Part of the 30S ribosomal subunit.

It is found in the plastid. The protein localises to the chloroplast. Its function is as follows. Binds 16S rRNA, required for the assembly of 30S particles. The protein is Small ribosomal subunit protein uS14c of Nandina domestica (Heavenly bamboo).